We begin with the raw amino-acid sequence, 79 residues long: Sec-independent protein translocase protein TatA (79 aa).

A helical transmembrane segment spans residues 1–21; sequence MGEFSLTHILLLAVIFLIFFG. Positions 52–79 are disordered; that stretch reads DIHDNQQVSHQNKQSMGQTQKQGENQNS. Residues 56 to 79 show a composition bias toward polar residues; it reads NQQVSHQNKQSMGQTQKQGENQNS.

This sequence belongs to the TatA/E family. The Tat system comprises two distinct complexes: a TatABC complex, containing multiple copies of TatA, TatB and TatC subunits, and a separate TatA complex, containing only TatA subunits. Substrates initially bind to the TatABC complex, which probably triggers association of the separate TatA complex to form the active translocon.

Its subcellular location is the cell inner membrane. In terms of biological role, part of the twin-arginine translocation (Tat) system that transports large folded proteins containing a characteristic twin-arginine motif in their signal peptide across membranes. TatA could form the protein-conducting channel of the Tat system. This chain is Sec-independent protein translocase protein TatA, found in Bdellovibrio bacteriovorus (strain ATCC 15356 / DSM 50701 / NCIMB 9529 / HD100).